The sequence spans 48 residues: uncharacterized protein (48 aa).

A helical membrane pass occupies residues 21-43 (SIFVSLGVFAVSVAILKSRLGNF).

It localises to the membrane. This is an uncharacterized protein from Schizosaccharomyces pombe (strain 972 / ATCC 24843) (Fission yeast).